The chain runs to 336 residues: Ribosomal RNA large subunit methyltransferase F (336 aa).

The protein belongs to the methyltransferase superfamily. METTL16/RlmF family.

It localises to the cytoplasm. It catalyses the reaction adenosine(1618) in 23S rRNA + S-adenosyl-L-methionine = N(6)-methyladenosine(1618) in 23S rRNA + S-adenosyl-L-homocysteine + H(+). In terms of biological role, specifically methylates the adenine in position 1618 of 23S rRNA. This Yersinia pestis bv. Antiqua (strain Nepal516) protein is Ribosomal RNA large subunit methyltransferase F.